A 452-amino-acid chain; its full sequence is GTPase Der (452 aa).

2 consecutive EngA-type G domains span residues 9–170 (KIIA…PEED) and 185–362 (LQIV…KTWN). GTP is bound by residues 15–22 (GRPNVGKS), 62–66 (DTPGF), 124–127 (NKCE), 191–198 (GRPNAGKS), 238–242 (DTAGL), and 303–306 (NKWD). Residues 363-448 (KKITTSKLNE…PIRFNYIKTK (86 aa)) form the KH-like domain.

This sequence belongs to the TRAFAC class TrmE-Era-EngA-EngB-Septin-like GTPase superfamily. EngA (Der) GTPase family. Associates with the 50S ribosomal subunit.

In terms of biological role, GTPase that plays an essential role in the late steps of ribosome biogenesis. In Rickettsia bellii (strain OSU 85-389), this protein is GTPase Der.